The sequence spans 375 residues: tRNA-specific 2-thiouridylase MnmA (375 aa).

Residues 13–20 and Met39 contribute to the ATP site; that span reads AMSGGVDS. Catalysis depends on Cys111, which acts as the Nucleophile. Residues Cys111 and Cys208 are joined by a disulfide bond. Gly135 serves as a coordination point for ATP. Residues 158 to 160 are interaction with tRNA; the sequence is KDQ. Cys208 (cysteine persulfide intermediate) is an active-site residue. Positions 313–314 are interaction with tRNA; the sequence is RY.

Belongs to the MnmA/TRMU family.

It localises to the cytoplasm. The catalysed reaction is S-sulfanyl-L-cysteinyl-[protein] + uridine(34) in tRNA + AH2 + ATP = 2-thiouridine(34) in tRNA + L-cysteinyl-[protein] + A + AMP + diphosphate + H(+). In terms of biological role, catalyzes the 2-thiolation of uridine at the wobble position (U34) of tRNA, leading to the formation of s(2)U34. The polypeptide is tRNA-specific 2-thiouridylase MnmA (Geotalea uraniireducens (strain Rf4) (Geobacter uraniireducens)).